We begin with the raw amino-acid sequence, 67 residues long: DNA gyrase inhibitor YacG (67 aa).

Zn(2+) contacts are provided by Cys9, Cys12, Cys28, and Cys32. The disordered stretch occupies residues 48 to 67 (PVSPDAEDELFSEELPPRAH).

It belongs to the DNA gyrase inhibitor YacG family. As to quaternary structure, interacts with GyrB. Requires Zn(2+) as cofactor.

Its function is as follows. Inhibits all the catalytic activities of DNA gyrase by preventing its interaction with DNA. Acts by binding directly to the C-terminal domain of GyrB, which probably disrupts DNA binding by the gyrase. The sequence is that of DNA gyrase inhibitor YacG from Pseudomonas fluorescens (strain ATCC BAA-477 / NRRL B-23932 / Pf-5).